The primary structure comprises 1436 residues: Pleiotropic drug resistance protein 1 (1436 aa).

In terms of domain architecture, ABC transporter 1 spans 165 to 438 (LDSIHILPSK…FESMGFKCPE (274 aa)). Position 198–205 (198–205 (GPPGSGKT)) interacts with ATP. One can recognise an ABC transmembrane type-2 1 domain in the interval 516 to 729 (QLLKVCTERE…SVNAILVNEF (214 aa)). 7 helical membrane-spanning segments follow: residues 534-554 (FVYLFKFFQLLIIALMTMTIF), 567-587 (GGIYSGALFFVVIMIMFNGLS), 622-642 (IPVTFAEVGMWVFLTYYVMGF), 653-673 (FLLLLLVNQMASALFRFIAAV), 679-699 (VASTFGAFALLLQFALGGFIL), 707-727 (WWIWGYWTSPLMYSVNAILVN), and 764-784 (IGVGALAGFIVMFNIAYSVAL). Residues 796 to 826 (TISDESENNESESSPQITSTQEGDSASENKK) are disordered. The segment covering 810-821 (PQITSTQEGDSA) has biased composition (polar residues). In terms of domain architecture, ABC transporter 2 spans 838-1090 (ITFDEVVYSV…HLIKYFESIP (253 aa)). Residue 883 to 890 (GVSGAGKT) coordinates ATP. The ABC transmembrane type-2 2 domain maps to 1163–1377 (TQCMACLWKQ…TLYGLVASQF (215 aa)). 7 helical membrane passes run 1184–1204 (AVRLIFTTFIALIFGTMFWDI), 1214–1234 (LVNAMGSMYAAVLFLGVQNSS), 1270–1290 (IPYIFVQATVYGLIVYSMIGF), 1301–1321 (FFFMFFTFLYFTFFGMMTVAV), 1327–1347 (VASIVAGFFYTVWNLFSGFIV), 1358–1378 (WYYWGCPIAWTLYGLVASQFG), and 1408–1428 (VVAAVIVAFAVVFAFTFALGI).

This sequence belongs to the ABC transporter superfamily. ABCG family. PDR (TC 3.A.1.205) subfamily. As to expression, roots, petals and leaf epidermis, where it is confined to glandular trichomes (at protein level).

The protein localises to the cell membrane. Excretes secondary metabolites such as terpenes. Involved in both constitutive and jasmonic acid-dependent induced defense. Confers some resistance to sclareol and B.cinerea. The protein is Pleiotropic drug resistance protein 1 (PDR1) of Nicotiana plumbaginifolia (Leadwort-leaved tobacco).